Here is a 394-residue protein sequence, read N- to C-terminus: Succinate--CoA ligase [ADP-forming] subunit beta (394 aa).

Residues K46, 53–55 (GRG), E99, C102, and E107 each bind ATP. Mg(2+) contacts are provided by N199 and D213. Substrate-binding positions include N264 and 321–323 (GIV).

Belongs to the succinate/malate CoA ligase beta subunit family. In terms of assembly, heterotetramer of two alpha and two beta subunits. Mg(2+) serves as cofactor.

The catalysed reaction is succinate + ATP + CoA = succinyl-CoA + ADP + phosphate. The enzyme catalyses GTP + succinate + CoA = succinyl-CoA + GDP + phosphate. Its pathway is carbohydrate metabolism; tricarboxylic acid cycle; succinate from succinyl-CoA (ligase route): step 1/1. In terms of biological role, succinyl-CoA synthetase functions in the citric acid cycle (TCA), coupling the hydrolysis of succinyl-CoA to the synthesis of either ATP or GTP and thus represents the only step of substrate-level phosphorylation in the TCA. The beta subunit provides nucleotide specificity of the enzyme and binds the substrate succinate, while the binding sites for coenzyme A and phosphate are found in the alpha subunit. In Haemophilus influenzae (strain PittGG), this protein is Succinate--CoA ligase [ADP-forming] subunit beta.